Here is a 36-residue protein sequence, read N- to C-terminus: Neuropeptide F (36 aa).

Residue Phe36 is modified to Phenylalanine amide.

This sequence belongs to the NPY family. Central and peripheral nervous system, and muscular pharynx.

Its subcellular location is the secreted. Functionally, may perform an important neurotransmitter function and may regulate muscular activity. This Arthurdendyus triangulatus (New Zealand flatworm) protein is Neuropeptide F.